An 828-amino-acid polypeptide reads, in one-letter code: DNA gyrase subunit A (828 aa).

Residues 38–501 (LPDARDGLKP…SYESIDTEDL (464 aa)) form the Topo IIA-type catalytic domain. Tyr-126 acts as the O-(5'-phospho-DNA)-tyrosine intermediate in catalysis. The short motif at 528–534 (QNRGGKG) is the GyrA-box element.

This sequence belongs to the type II topoisomerase GyrA/ParC subunit family. Heterotetramer, composed of two GyrA and two GyrB chains. In the heterotetramer, GyrA contains the active site tyrosine that forms a transient covalent intermediate with DNA, while GyrB binds cofactors and catalyzes ATP hydrolysis.

The protein localises to the cytoplasm. The catalysed reaction is ATP-dependent breakage, passage and rejoining of double-stranded DNA.. In terms of biological role, a type II topoisomerase that negatively supercoils closed circular double-stranded (ds) DNA in an ATP-dependent manner to modulate DNA topology and maintain chromosomes in an underwound state. Negative supercoiling favors strand separation, and DNA replication, transcription, recombination and repair, all of which involve strand separation. Also able to catalyze the interconversion of other topological isomers of dsDNA rings, including catenanes and knotted rings. Type II topoisomerases break and join 2 DNA strands simultaneously in an ATP-dependent manner. The protein is DNA gyrase subunit A of Helicobacter pylori (strain J99 / ATCC 700824) (Campylobacter pylori J99).